Consider the following 526-residue polypeptide: Adenylyl cyclase-associated protein (526 aa).

The interval 1-168 is adenyl cyclase-binding; it reads MPDSKYTMQG…RQSKYFAYLS (168 aa). Disordered stretches follow at residues 43–72, 255–304, and 326–371; these read EASK…PEVE, QSTK…DANK, and KVDK…RPPR. The span at 45–64 shows a compositional bias: polar residues; the sequence is SKNNKPSDSGADANTTNEPS. The SH3-binding signature appears at 169 to 369; it reads ALSEGAPLFS…KPSTLKTKRP (201 aa). The segment covering 262–274 has biased composition (low complexity); that stretch reads ATSSPSPASATAA. A compositionally biased stretch (pro residues) spans 275-285; sequence PAPPPPPPAPP. The span at 290-302 shows a compositional bias: polar residues; sequence EISNDTPATSSDA. Positions 326–338 are enriched in basic and acidic residues; the sequence is KVDKSQQTHKNPE. The segment covering 342–352 has biased composition (low complexity); the sequence is SSTVSSTGSKS. Residues 354-361 are interaction with SH3 domain of ABP1; the sequence is PPPRPKKP. Residues 357 to 370 are compositionally biased toward basic residues; sequence RPKKPSTLKTKRPP. The 136-residue stretch at 369-504 folds into the C-CAP/cofactor C-like domain; sequence PPRKELVGNK…EDDDYVEFPI (136 aa). The interval 370-526 is dimerization and actin-binding; sequence PRKELVGNKW…FKSAVFEHAG (157 aa). A Phosphoserine modification is found at S454.

Belongs to the CAP family. In terms of assembly, homodimer.

It localises to the cytoplasm. Its subcellular location is the cytoskeleton. The protein localises to the actin patch. Functionally, the N-terminal domain binds to adenylyl cyclase, thereby enabling adenylyl cyclase to be activated by upstream regulatory signals, such as Ras. The C-terminal domain is required for normal cellular morphology and growth control. The protein is Adenylyl cyclase-associated protein (SRV2) of Saccharomyces cerevisiae (strain ATCC 204508 / S288c) (Baker's yeast).